Here is a 500-residue protein sequence, read N- to C-terminus: L-2-amino-4-chloropent-4-enoate dechlorinase/desaturase (500 aa).

At Lys311 the chain carries N6-(pyridoxal phosphate)lysine.

It belongs to the trans-sulfuration enzymes family. It depends on pyridoxal 5'-phosphate as a cofactor.

The enzyme catalyses L-2-amino-4-chloropent-4-enoate = L-propargylglycine + chloride + H(+). Its pathway is amino-acid metabolism. It participates in antibiotic biosynthesis. Its function is as follows. Involved in the biosynthesis of terminal alkyne-containing amino acids such as L-propargylglycine (Pra) and L-beta-ethynylserine, that are produced as antibiotics by S.cattleya. Catalyzes gamma-elimination of chloride from 4-chloro-allyl-L-glycine (also named L-2-amino-4-chloropent-4-enoate), followed by an isomerization, to form the terminal-alkyne product L-propargylglycine. The protein is L-2-amino-4-chloropent-4-enoate dechlorinase/desaturase of Streptantibioticus cattleyicolor (strain ATCC 35852 / DSM 46488 / JCM 4925 / NBRC 14057 / NRRL 8057) (Streptomyces cattleya).